The chain runs to 303 residues: Putative monooxygenase p33MONOX (303 aa).

Disordered stretches follow at residues 1–20 (MASR…LGKM), 37–56 (LEDP…IPWK), 66–96 (HLDK…KAPV), 156–233 (KLQS…LQKS), and 260–283 (RVGE…GKKQ). Position 44 is a phosphothreonine (Thr-44). The Flavin-containing monooxygenase motif motif lies at 67–77 (LDKTEEGAASV). The segment covering 76 to 89 (SVSSLAVTPSPATD) has biased composition (polar residues). Over residues 170 to 183 (ASAQSTPSSTPHAS) the composition is skewed to low complexity. Phosphothreonine is present on Thr-175. Ser-183 is modified (phosphoserine).

This sequence belongs to the P33MONOX family. In terms of assembly, interacts with NELFB, NOL12 and PRNP. Expressed in neuronal pyramidal cells of the hippocampus and in the neurons of the cortex.

The protein resides in the cytoplasm. Its function is as follows. Potential NADPH-dependent oxidoreductase. May be involved in the regulation of neuronal survival, differentiation and axonal outgrowth. This chain is Putative monooxygenase p33MONOX (P33monox), found in Mus musculus (Mouse).